The chain runs to 518 residues: MPHHEFECSKVIPERKKHAVIKGKGETLADALPQGYLNTIPGSISERGCAYCVAKHVIGTPMKDVIHISHGPVGCTYDTWQTKRYISDNDNFQLKYTYATDVKEKHIVFGAEKLLKQNIIEAFKRFPQIKRMTIYQTPCTALIGDDINAIAEEVMEEMPEVDIFVCNSPGFAGPSQSGGHHKINIAWINQKVGTVEPEITGDHVINYVGEYNIQGDQEVMVDYFKRMGIQVLSTFTGNLSYDGLRAMHRAHLNVLECARSAEYICNELRVRYGIPRLDIDGFGFKPLADSLRKYGMFFGIEDRRKAIIDEEVARWKPELDWYKERLMGKKVSVWPGGSKLWHWAHVIEEEMGLKVVSVYTKFGHQGDMEKGMPRCGEGTLAIDDPNELEGLEALEMLKPDIILTGKRPGEVAKKVRVPYLNAHAYHNGPYKGFEGWVRFARDIYNAIYSPIHQLSGIDITKDNAPEWGNGFRTRQMLSDGNLSDAVRNSETLAQYTGGYDSVSNVREREYPAFERKVG.

Residues Cys-49 and Cys-75 each contribute to the [8Fe-7S] cluster site. The [8Fe-9S-C-homocitryl] cluster site is built by Cys-257 and His-423.

Hexamer of two alpha, two beta, and two delta chains. Requires [8Fe-7S] cluster as cofactor. It depends on [8Fe-9S-C-homocitryl] cluster as a cofactor.

The catalysed reaction is N2 + 8 reduced [2Fe-2S]-[ferredoxin] + 16 ATP + 16 H2O = H2 + 8 oxidized [2Fe-2S]-[ferredoxin] + 2 NH4(+) + 16 ADP + 16 phosphate + 6 H(+). This iron-iron protein is part of the nitrogenase complex that catalyzes the key enzymatic reactions in nitrogen fixation. Other nitrogenase complexes utilize a molybdenum-iron protein or a vanadium-iron protein. The chain is Nitrogenase iron-iron protein alpha chain (anfD) from Ruminiclostridium hungatei (Clostridium hungatei).